The chain runs to 119 residues: Large ribosomal subunit protein uL22 (119 aa).

This sequence belongs to the universal ribosomal protein uL22 family. In terms of assembly, part of the 50S ribosomal subunit.

In terms of biological role, this protein binds specifically to 23S rRNA; its binding is stimulated by other ribosomal proteins, e.g. L4, L17, and L20. It is important during the early stages of 50S assembly. It makes multiple contacts with different domains of the 23S rRNA in the assembled 50S subunit and ribosome. Functionally, the globular domain of the protein is located near the polypeptide exit tunnel on the outside of the subunit, while an extended beta-hairpin is found that lines the wall of the exit tunnel in the center of the 70S ribosome. This chain is Large ribosomal subunit protein uL22, found in Rickettsia prowazekii (strain Madrid E).